The following is a 340-amino-acid chain: Phosphate acyltransferase (340 aa).

The protein belongs to the PlsX family. As to quaternary structure, homodimer. Probably interacts with PlsY.

Its subcellular location is the cytoplasm. It catalyses the reaction a fatty acyl-[ACP] + phosphate = an acyl phosphate + holo-[ACP]. It functions in the pathway lipid metabolism; phospholipid metabolism. Its function is as follows. Catalyzes the reversible formation of acyl-phosphate (acyl-PO(4)) from acyl-[acyl-carrier-protein] (acyl-ACP). This enzyme utilizes acyl-ACP as fatty acyl donor, but not acyl-CoA. The chain is Phosphate acyltransferase from Leptospira biflexa serovar Patoc (strain Patoc 1 / ATCC 23582 / Paris).